Here is a 405-residue protein sequence, read N- to C-terminus: Transposase from transposon Tn1545 (405 aa).

Positions glycine 79–isoleucine 163 constitute a Core-binding (CB) domain. The region spanning valine 186–lysine 392 is the Tyr recombinase domain. Catalysis depends on residues arginine 225, lysine 264, histidine 343, arginine 346, and histidine 369. The O-(3'-phospho-DNA)-tyrosine intermediate role is filled by tyrosine 379.

This sequence belongs to the 'phage' integrase family.

This is Transposase from transposon Tn1545 (int) from Streptococcus agalactiae serotype V (strain ATCC BAA-611 / 2603 V/R).